A 327-amino-acid chain; its full sequence is Zinc finger C2HC domain-containing protein 1A (327 aa).

Residues 13–42 form a C2HC/C3H-type 1 zinc finger; sequence ELVPCKICGRSFFPKVLKKHVPICQKTAAK. The Zn(2+) site is built by cysteine 17, cysteine 20, histidine 32, and cysteine 36. 2 disordered regions span residues 40–96 and 108–131; these read AAKR…KHEE and NQVI…DYIQ. Positions 46 to 56 are enriched in basic and acidic residues; it reads VFDSGRQRAEG. The segment covering 63–76 has biased composition (low complexity); it reads KPIKPKLQSSSSSS. Pro residues predominate over residues 116 to 125; sequence PLPPPPPPSY. Residues 128–157 form a C2HC/C3H-type 2 zinc finger; that stretch reads DYIQCPYCQRRFGENAADRHIKFCKEQASR. Residues cysteine 132, cysteine 135, histidine 147, and cysteine 151 each coordinate Zn(2+). The segment at 154-271 is disordered; it reads QASRISNKSK…NPSTGIGMNK (118 aa). Over residues 187-199 the composition is skewed to polar residues; that stretch reads NSPTASSVSSRLP. Residues 211–229 show a composition bias toward low complexity; that stretch reads GIPSSKPSSTGSIKSTPSG. 2 stretches are compositionally biased toward polar residues: residues 233-245 and 255-267; these read LRNN…SPPS and VSQS…STGI.

The protein belongs to the ZC2HC1 family. It depends on Zn(2+) as a cofactor.

This is Zinc finger C2HC domain-containing protein 1A (zc2hc1a) from Danio rerio (Zebrafish).